The sequence spans 346 residues: Transcription termination factor 4, mitochondrial (346 aa).

The N-terminal 42 residues, 1–42, are a transit peptide targeting the mitochondrion; the sequence is MASLGRQVPEWHRLLALSWACLVRQTPHLREQKQMSPSLSCK. 5 MTERF repeats span residues 142–172, 177–204, 209–239, 245–270, and 290–318; these read FNALKKNPQLLKLSSMQMKRRSSYLRKLGLG, KRVLSVCPEVFTMHQRDIDRVVKVLREK, AQHITDVLHRCPTVLQEDPNELEYKFQYAYF, HLDIVRTNFLQYSITKIKQRHIYLER, and LRNILRVSEAEFLARTACSSVEEFQVFKK. Residues 310-327 are dimerization with NSUN4; that stretch reads VEEFQVFKKLLDQEEEEE. The interval 321–346 is disordered; sequence DQEEEEESESHASEEEEEEEEEEELL. Over residues 322–346 the composition is skewed to acidic residues; it reads QEEEEESESHASEEEEEEEEEEELL.

The protein belongs to the mTERF family. In terms of assembly, heterodimer with NSUN4; this interaction may be required for NSUN4 recruitment to the mitochondrial large ribosomal subunit. In terms of tissue distribution, widely expressed, with highest levels in liver, followed by testis, kidney and brain.

Its subcellular location is the mitochondrion. Its function is as follows. Regulator of mitochondrial ribosome biogenesis and translation. Binds to mitochondrial ribosomal RNAs 16S, 12S and 7S. Targets NSUN4 RNA methyltransferase to the mitochondrial large ribosomal subunit. The chain is Transcription termination factor 4, mitochondrial (Mterf4) from Mus musculus (Mouse).